A 263-amino-acid polypeptide reads, in one-letter code: S-methyl-5'-thioadenosine phosphorylase (263 aa).

Phosphate is bound by residues threonine 13, 55 to 56, and 88 to 89; these read RH and SA. Methionine 186 lines the substrate pocket. Threonine 187 contributes to the phosphate binding site. Residue 210-212 coordinates substrate; it reads DYD.

This sequence belongs to the PNP/MTAP phosphorylase family. MTAP subfamily. In terms of assembly, homohexamer. Dimer of a homotrimer.

It catalyses the reaction S-methyl-5'-thioadenosine + phosphate = 5-(methylsulfanyl)-alpha-D-ribose 1-phosphate + adenine. It participates in amino-acid biosynthesis; L-methionine biosynthesis via salvage pathway; S-methyl-5-thio-alpha-D-ribose 1-phosphate from S-methyl-5'-thioadenosine (phosphorylase route): step 1/1. Catalyzes the reversible phosphorylation of S-methyl-5'-thioadenosine (MTA) to adenine and 5-methylthioribose-1-phosphate. Involved in the breakdown of MTA, a major by-product of polyamine biosynthesis. Responsible for the first step in the methionine salvage pathway after MTA has been generated from S-adenosylmethionine. Has broad substrate specificity with 6-aminopurine nucleosides as preferred substrates. This is S-methyl-5'-thioadenosine phosphorylase from Nitrosopumilus maritimus (strain SCM1).